Here is a 159-residue protein sequence, read N- to C-terminus: Transcriptional repressor NrdR (159 aa).

A zinc finger lies at 3-34 (CPFCGSDNTSVKDSRAAEDDTAVRRRRVCESC). Residues 49–139 (IIVVKRDGKR…VYRDFKDPSD (91 aa)) enclose the ATP-cone domain.

This sequence belongs to the NrdR family. Zn(2+) serves as cofactor.

In terms of biological role, negatively regulates transcription of bacterial ribonucleotide reductase nrd genes and operons by binding to NrdR-boxes. The chain is Transcriptional repressor NrdR from Hyphomonas neptunium (strain ATCC 15444).